A 117-amino-acid polypeptide reads, in one-letter code: Large ribosomal subunit protein bL20 (117 aa).

This sequence belongs to the bacterial ribosomal protein bL20 family.

Binds directly to 23S ribosomal RNA and is necessary for the in vitro assembly process of the 50S ribosomal subunit. It is not involved in the protein synthesizing functions of that subunit. In Rippkaea orientalis (strain PCC 8801 / RF-1) (Cyanothece sp. (strain PCC 8801)), this protein is Large ribosomal subunit protein bL20.